The following is a 1668-amino-acid chain: Kinesin-like protein KIF21B (1668 aa).

Positions 8–371 (CVKVAVRIRP…LKYANRARNI (364 aa)) constitute a Kinesin motor domain. ATP is bound at residue 87–94 (GQTGAGKT). A coiled-coil region spans residues 372–465 (KNKVVVNQDK…LMSQEANLLL (94 aa)). The interaction with TRIM3 stretch occupies residues 401-1100 (MEYKAGKRVI…LQALIYNVQH (700 aa)). Disordered stretches follow at residues 553-629 (KKKE…PEEK) and 837-866 (RVGL…GARS). The segment covering 579–628 (NSEETDENEAEEEEEERDESGCEEEEGREDEDEDSGSEESLVDSDSDPEE) has biased composition (acidic residues). At S580 the chain carries Phosphoserine. T583 is modified (phosphothreonine). Residues 847–866 (SGAEVSASTTSSEAESGARS) are compositionally biased toward low complexity. Positions 924–1019 (IIDIVMQRMT…TKEELDSTDT (96 aa)) form a coiled coil. S1150, S1168, and S1217 each carry phosphoserine. A compositionally biased stretch (polar residues) spans 1199 to 1219 (LPTRGSTFPRQSRGATDTSPL). The segment at 1199–1253 (LPTRGSTFPRQSRGATDTSPLTRRKSYDRGQPIRSTDMGFTPPSSPPTRPRNDRN) is disordered. Residue T1239 is modified to Phosphothreonine. S1243 is subject to Phosphoserine. WD repeat units lie at residues 1308 to 1345 (GHTK…EIAA), 1348 to 1386 (GHPN…KCIR), 1412 to 1450 (QGEH…PIGK), 1453 to 1495 (GHIG…TGTI), 1504 to 1541 (PHYD…LIQQ), 1545 to 1584 (AHKD…PIGE), and 1587 to 1624 (GHDS…TPCL).

The protein belongs to the TRAFAC class myosin-kinesin ATPase superfamily. Kinesin family. Interacts with TRIM3; the interaction positively affects motility of KIF21B. Interacts with GABARAP and GABA(A) receptor subunits: GABRG2, GABRA1 and GABRA2. May interact with GABA(A) receptor subunits: GABRB2 and GABRB3. Expressed in brain (at protein level). Expressed in spleen and at lower levels in testes.

It is found in the cytoplasm. The protein localises to the cytoskeleton. The protein resides in the cell projection. It localises to the dendrite. Its subcellular location is the growth cone. It is found in the axon. The protein localises to the cytoplasmic vesicle. Its function is as follows. Plus-end directed microtubule-dependent motor protein which displays processive activity. Is involved in regulation of microtubule dynamics, synapse function and neuronal morphology, including dendritic tree branching and spine formation. Plays a role in lerning and memory. Involved in delivery of gamma-aminobutyric acid (GABA(A)) receptor to cell surface. This Mus musculus (Mouse) protein is Kinesin-like protein KIF21B (Kif21b).